Consider the following 893-residue polypeptide: ATPase family gene 2 protein homolog A (893 aa).

Residues 1–10 (MSSKKNRKRL) are compositionally biased toward basic residues. Positions 1–26 (MSSKKNRKRLNQSAENGSSLPSAASS) are disordered. The tract at residues 1 to 237 (MSSKKNRKRL…SLELSLQLSQ (237 aa)) is required for interaction with AFG2B and CINP. Positions 11-25 (NQSAENGSSLPSAAS) are enriched in polar residues. Thr-272 carries the post-translational modification Phosphothreonine. 2 positions are modified to phosphoserine: Ser-274 and Ser-279. Residues 394 to 401 (GPPGTGKT) and 668 to 675 (GPPGCSKT) contribute to the ATP site. Lys-859 is covalently cross-linked (Glycyl lysine isopeptide (Lys-Gly) (interchain with G-Cter in SUMO2)).

Belongs to the AAA ATPase family. AFG2 subfamily. Part of the 55LCC heterohexameric ATPase complex composed at least of AIRIM, AFG2A, AFG2B and CINP. Associates with pre-60S ribosomal particles.

The protein localises to the cytoplasm. It localises to the mitochondrion. It is found in the cytoskeleton. The protein resides in the spindle. The enzyme catalyses ATP + H2O = ADP + phosphate + H(+). AFG2A alone display limited ATPase activity and is not regulated by RNA or DNA binding. In the context of 55LCC heterohexameric ATPase complex, the ATPase activity increases and is stimulated by DNA binding and inhibited in presence of RNA. Its function is as follows. ATP-dependent chaperone part of the 55LCC heterohexameric ATPase complex which is chromatin-associated and promotes replisome proteostasis to maintain replication fork progression and genome stability. Required for replication fork progression, sister chromatid cohesion, and chromosome stability. The ATPase activity is specifically enhanced by replication fork DNA and is coupled to cysteine protease-dependent cleavage of replisome substrates in response to replication fork damage. Uses ATPase activity to process replisome substrates in S-phase, facilitating their proteolytic turnover from chromatin to ensure DNA replication and mitotic fidelity. Plays an essential role in the cytoplasmic maturation steps of pre-60S ribosomal particles by promoting the release of shuttling protein RSL24D1/RLP24 from the pre-ribosomal particles. May be involved in morphological and functional mitochondrial transformations during spermatogenesis. The chain is ATPase family gene 2 protein homolog A from Homo sapiens (Human).